Consider the following 224-residue polypeptide: uncharacterized protein (224 aa).

Zn(2+)-binding residues include H57, H59, D61, H62, H138, D162, and H203.

It belongs to the metallo-beta-lactamase superfamily. Glyoxalase II family. It depends on Zn(2+) as a cofactor.

This is an uncharacterized protein from Mycobacterium tuberculosis (strain CDC 1551 / Oshkosh).